Consider the following 310-residue polypeptide: Protein FIP2 (310 aa).

A disordered region spans residues 1–58; the sequence is MGFAPVTPAAVETYDPDVDHDDESNGLDGFRVRSKRSGKFSGGYSDSPREVGDGYGVR. The segment covering 14-25 has biased composition (acidic residues); it reads YDPDVDHDDESN. Residues serine 77 and serine 105 each carry the phosphoserine modification. 3 disordered regions span residues 115 to 135, 152 to 171, and 177 to 221; these read ATRLRTHGKPSSGDFSHGSGG, FKPKNFSKPEPNFSQDLDYD, and DRAE…GSSS. Over residues 208 to 221 the composition is skewed to polar residues; the sequence is PRNTGASNGYGSSS.

Interacts with FRI. Interacts with WAV3.

This is Protein FIP2 from Arabidopsis thaliana (Mouse-ear cress).